The following is a 142-amino-acid chain: MPTPSMEDYIEKIYSLIETKGYARVSDIADELFVHPSSVTKMVQKLDKDEYLIYEKYRGLILTPKGTQMGKRLLERHALLESFLSIIGVDSSHIYHDVEGIEHHLSWNSIDRIGNVVQFFENHPDALEALKAMETTKPETNE.

An HTH dtxR-type domain is found at 1–63 (MPTPSMEDYI…YEKYRGLILT (63 aa)). Residues Asp8, Glu11, His77, Glu99, Glu102, and His103 each coordinate Mn(2+).

The protein belongs to the DtxR/MntR family. Homodimer.

The protein localises to the cytoplasm. DNA binding is strongly activated by Mn(2+). In terms of biological role, central regulator of manganese homeostasis. In Listeria welshimeri serovar 6b (strain ATCC 35897 / DSM 20650 / CCUG 15529 / CIP 8149 / NCTC 11857 / SLCC 5334 / V8), this protein is HTH-type transcriptional regulator MntR.